Consider the following 562-residue polypeptide: Glycine betaine/proline/choline/ectoine transporter VP1456 (562 aa).

Helical transmembrane passes span 68 to 88, 110 to 130, 147 to 167, 203 to 223, 243 to 263, 287 to 307, 322 to 342, 373 to 393, 404 to 424, 456 to 476, 503 to 523, and 531 to 551; these read PVFG…LLVE, FFMW…FSPL, VSWL…FWSV, WGVH…FFAF, AWGW…LFGL, GIGT…LSVV, MIVA…TAMG, WTVF…MFIA, FLFA…SVFG, VLPY…VFFI, IFWA…GGKE, and GVVA…VSLV.

This sequence belongs to the BCCT transporter (TC 2.A.15) family.

Its subcellular location is the cell inner membrane. Functionally, involved in the uptake of osmoprotectants. Can transport glycine betaine, proline, choline and ectoine. This is Glycine betaine/proline/choline/ectoine transporter VP1456 from Vibrio parahaemolyticus serotype O3:K6 (strain RIMD 2210633).